A 160-amino-acid chain; its full sequence is Type IV major fimbrial protein FimA (160 aa).

A propeptide spans 1–7 (MKSLQKG) (leader sequence). F8 bears the N-methylphenylalanine mark. The helical transmembrane segment at 8-28 (FTLIELMIVVAIIGILAAFAI) threads the bilayer. Cysteines 63 and 105 form a disulfide.

Belongs to the N-Me-Phe pilin family. In terms of assembly, the pili are polar flexible filaments of about 5.4 nanometers diameter and 2.5 micrometers average length; they consist of only a single polypeptide chain arranged in a helical configuration of five subunits per turn in the assembled pilus.

The protein resides in the fimbrium. Its subcellular location is the membrane. In terms of biological role, major component of the type IV fimbriae that plays an essential role in twitching motility, natural transformation, and protease secretion. The sequence is that of Type IV major fimbrial protein FimA (fimA) from Dichelobacter nodosus (Bacteroides nodosus).